A 371-amino-acid chain; its full sequence is Bifunctional enzyme IspD/IspF (371 aa).

Positions 1 to 214 (MNSCFIILAG…NSDIKFNNLI (214 aa)) are 2-C-methyl-D-erythritol 4-phosphate cytidylyltransferase. Residues 215 to 371 (KFGIGFDVHR…EVIASVIKND (157 aa)) are 2-C-methyl-D-erythritol 2,4-cyclodiphosphate synthase. Residues D221 and H223 each coordinate a divalent metal cation. 4-CDP-2-C-methyl-D-erythritol 2-phosphate-binding positions include 221 to 223 (DVH) and 247 to 248 (HS). An a divalent metal cation-binding site is contributed by H255. 4-CDP-2-C-methyl-D-erythritol 2-phosphate contacts are provided by residues 269–271 (DIG), 274–278 (FSDKN), and K355.

This sequence in the N-terminal section; belongs to the IspD/TarI cytidylyltransferase family. IspD subfamily. In the C-terminal section; belongs to the IspF family. It depends on a divalent metal cation as a cofactor.

The enzyme catalyses 2-C-methyl-D-erythritol 4-phosphate + CTP + H(+) = 4-CDP-2-C-methyl-D-erythritol + diphosphate. It catalyses the reaction 4-CDP-2-C-methyl-D-erythritol 2-phosphate = 2-C-methyl-D-erythritol 2,4-cyclic diphosphate + CMP. Its pathway is isoprenoid biosynthesis; isopentenyl diphosphate biosynthesis via DXP pathway; isopentenyl diphosphate from 1-deoxy-D-xylulose 5-phosphate: step 2/6. The protein operates within isoprenoid biosynthesis; isopentenyl diphosphate biosynthesis via DXP pathway; isopentenyl diphosphate from 1-deoxy-D-xylulose 5-phosphate: step 4/6. Bifunctional enzyme that catalyzes the formation of 4-diphosphocytidyl-2-C-methyl-D-erythritol from CTP and 2-C-methyl-D-erythritol 4-phosphate (MEP) (IspD), and catalyzes the conversion of 4-diphosphocytidyl-2-C-methyl-D-erythritol 2-phosphate (CDP-ME2P) to 2-C-methyl-D-erythritol 2,4-cyclodiphosphate (ME-CPP) with a corresponding release of cytidine 5-monophosphate (CMP) (IspF). In Pelagibacter ubique (strain HTCC1062), this protein is Bifunctional enzyme IspD/IspF.